The primary structure comprises 89 residues: Small ribosomal subunit protein uS15 (89 aa).

Residues 1 to 10 show a composition bias toward basic and acidic residues; sequence MSLDTTEKQE. The segment at 1-23 is disordered; the sequence is MSLDTTEKQELINAHQTHATDTG. Over residues 14-23 the composition is skewed to polar residues; that stretch reads AHQTHATDTG.

This sequence belongs to the universal ribosomal protein uS15 family. Part of the 30S ribosomal subunit. Forms a bridge to the 50S subunit in the 70S ribosome, contacting the 23S rRNA.

Its function is as follows. One of the primary rRNA binding proteins, it binds directly to 16S rRNA where it helps nucleate assembly of the platform of the 30S subunit by binding and bridging several RNA helices of the 16S rRNA. In terms of biological role, forms an intersubunit bridge (bridge B4) with the 23S rRNA of the 50S subunit in the ribosome. This Synechococcus sp. (strain WH7803) protein is Small ribosomal subunit protein uS15.